The chain runs to 393 residues: GTP exchange factor for ARFs 1 (393 aa).

The span at 1–12 shows a compositional bias: polar residues; sequence MSSRYSERNGLS. Residues 1–21 are disordered; that stretch reads MSSRYSERNGLSETEKMTLPK. The stretch at 12–54 forms a coiled coil; that stretch reads SETEKMTLPKVRKRKAQLVDEIEALKNEVREVDEELDQVYYTH. The region spanning 53–239 is the SEC7 domain; it reads THPKSKEYHK…TEVYESVSVT (187 aa). A PH domain is found at 261 to 377; it reads HAEREGWLFK…MRSWINAISR (117 aa).

Its function is as follows. Promotes guanine-nucleotide exchange on ARF. Promotes the activation of ARF through replacement of GDP with GTP. Plays a role in cell shedding during embryogenesis, probably by promoting the endocytosis of cell adhesion molecules. In Caenorhabditis elegans, this protein is GTP exchange factor for ARFs 1 (grp-1).